Consider the following 675-residue polypeptide: DNA ligase (675 aa).

NAD(+) is bound by residues 32 to 36 (DAEYD), 81 to 82 (SL), and E113. The N6-AMP-lysine intermediate role is filled by K115. Residues R136, E173, K291, and K315 each contribute to the NAD(+) site. Residues C409, C412, C427, and C433 each coordinate Zn(2+). Residues 595–675 (SEKTYFFNKK…ELNSLIRIKE (81 aa)) form the BRCT domain.

Belongs to the NAD-dependent DNA ligase family. LigA subfamily. The cofactor is Mg(2+). It depends on Mn(2+) as a cofactor.

The enzyme catalyses NAD(+) + (deoxyribonucleotide)n-3'-hydroxyl + 5'-phospho-(deoxyribonucleotide)m = (deoxyribonucleotide)n+m + AMP + beta-nicotinamide D-nucleotide.. In terms of biological role, DNA ligase that catalyzes the formation of phosphodiester linkages between 5'-phosphoryl and 3'-hydroxyl groups in double-stranded DNA using NAD as a coenzyme and as the energy source for the reaction. It is essential for DNA replication and repair of damaged DNA. This chain is DNA ligase, found in Buchnera aphidicola subsp. Acyrthosiphon pisum (strain APS) (Acyrthosiphon pisum symbiotic bacterium).